Here is a 359-residue protein sequence, read N- to C-terminus: Queuine tRNA-ribosyltransferase (359 aa).

The active-site Proton acceptor is the Asp92. Residues Asp92–Phe96, Asp146, Gln189, and Gly216 contribute to the substrate site. Positions Gly245–Asp251 are RNA binding. The active-site Nucleophile is Asp264. An RNA binding; important for wobble base 34 recognition region spans residues Thr269–Arg273. Residues Cys302, Cys304, Cys307, and His333 each coordinate Zn(2+).

It belongs to the queuine tRNA-ribosyltransferase family. In terms of assembly, homodimer. Within each dimer, one monomer is responsible for RNA recognition and catalysis, while the other monomer binds to the replacement base PreQ1. Zn(2+) is required as a cofactor.

It carries out the reaction 7-aminomethyl-7-carbaguanine + guanosine(34) in tRNA = 7-aminomethyl-7-carbaguanosine(34) in tRNA + guanine. The protein operates within tRNA modification; tRNA-queuosine biosynthesis. In terms of biological role, catalyzes the base-exchange of a guanine (G) residue with the queuine precursor 7-aminomethyl-7-deazaguanine (PreQ1) at position 34 (anticodon wobble position) in tRNAs with GU(N) anticodons (tRNA-Asp, -Asn, -His and -Tyr). Catalysis occurs through a double-displacement mechanism. The nucleophile active site attacks the C1' of nucleotide 34 to detach the guanine base from the RNA, forming a covalent enzyme-RNA intermediate. The proton acceptor active site deprotonates the incoming PreQ1, allowing a nucleophilic attack on the C1' of the ribose to form the product. After dissociation, two additional enzymatic reactions on the tRNA convert PreQ1 to queuine (Q), resulting in the hypermodified nucleoside queuosine (7-(((4,5-cis-dihydroxy-2-cyclopenten-1-yl)amino)methyl)-7-deazaguanosine). This is Queuine tRNA-ribosyltransferase from Rickettsia bellii (strain RML369-C).